A 241-amino-acid polypeptide reads, in one-letter code: 4-hydroxy-tetrahydrodipicolinate reductase (241 aa).

NAD(+)-binding positions include Gly7–Met12, Gly74–Thr76, and Ser98–Met101. The active-site Proton donor/acceptor is the His131. A (S)-2,3,4,5-tetrahydrodipicolinate-binding site is contributed by His132. Catalysis depends on Lys135, which acts as the Proton donor. Gly141–Ser142 is a binding site for (S)-2,3,4,5-tetrahydrodipicolinate.

The protein belongs to the DapB family.

The protein resides in the cytoplasm. The catalysed reaction is (S)-2,3,4,5-tetrahydrodipicolinate + NAD(+) + H2O = (2S,4S)-4-hydroxy-2,3,4,5-tetrahydrodipicolinate + NADH + H(+). It catalyses the reaction (S)-2,3,4,5-tetrahydrodipicolinate + NADP(+) + H2O = (2S,4S)-4-hydroxy-2,3,4,5-tetrahydrodipicolinate + NADPH + H(+). Its pathway is amino-acid biosynthesis; L-lysine biosynthesis via DAP pathway; (S)-tetrahydrodipicolinate from L-aspartate: step 4/4. Catalyzes the conversion of 4-hydroxy-tetrahydrodipicolinate (HTPA) to tetrahydrodipicolinate. The sequence is that of 4-hydroxy-tetrahydrodipicolinate reductase from Alkaliphilus oremlandii (strain OhILAs) (Clostridium oremlandii (strain OhILAs)).